The chain runs to 879 residues: RNA-directed RNA polymerase (879 aa).

Residue 259–266 (GLPYVGRT) participates in GTP binding. One can recognise a RdRp catalytic domain in the interval 398 to 598 (LVYADNIYIV…DKERLFCSAA (201 aa)). The tract at residues 846-879 (GAGTSRPMGMEAPTRSKNAVKMAKRRQRQKESRQ) is disordered.

As to quaternary structure, interacts with VP3 in the cytoplasm. In terms of processing, may exist in multiple phosphorylated forms.

It is found in the virion. It carries out the reaction RNA(n) + a ribonucleoside 5'-triphosphate = RNA(n+1) + diphosphate. Its function is as follows. RNA-dependent RNA polymerase which is found both free and covalently attached to the genomic RNA. May also contain guanylyl and methyl transferase activities. This is RNA-directed RNA polymerase (VP1) from Gallus gallus (Chicken).